A 203-amino-acid chain; its full sequence is MLSYLCFGCFLVSASLEIACGTPIKETSKADAGGGAGIAILGVLAKVGVEAALQQIDNIWKGDVVRYWKCAVENRSDKTLYAYGTTSESGSMGTVFADIPSGSTGIFVWEKSRGAATGASGVVHYRYGDKILNLMASIPYDWNLYQSWANARVSNEKESFYNLYNGLNGAKPATRGGNWGDVDGAKFFLTEKSHAEFKVIFSG.

The signal sequence occupies residues 1–21 (MLSYLCFGCFLVSASLEIACG). The Cell attachment site motif lies at 175–177 (RGG).

The protein belongs to the actinoporin family. HALT subfamily. Octamer or nonamer in membranes. Monomer in the soluble state. In vitro, interacts with folate receptor alpha (of target organism). In terms of tissue distribution, strongly expressed in the gland and mucous cells in the endoderm.

The protein localises to the nematocyst. It is found in the secreted. Its subcellular location is the target cell membrane. Its function is as follows. Pore-forming protein that forms hydrophilic pores and causes cytolysis. Compared to equinatoxin-2 (AC P61914), it reveals lower cytolysis activity (5-12-fold difference, tested on erythrocytes), a larger pore size (probably 2-3 nm) and different affinity to membrane lipids (100-fold lower affinity to sphingomyelin). Binds to sulfatides (SFT). Shows cytolytic activity on HeLa cells, with a different potency than its paralogs (from most potent to less potent: HALT-4&gt;HALT-6~HALT-1&gt;HALT-3&gt;HALT-7&gt;HALT-2). Pore formation is a multi-step process that involves specific recognition of membrane lipid by a protein aromatic residues rich region, firm binding to the membrane (mainly driven by hydrophobic interactions) accompanied by the transfer of the N-terminal region to the lipid-water interface and finally pore formation after oligomerization of monomers. In vitro, binds to the folate receptor alpha (FOLR1), a GPI-anchored membrane protein that plays a major role in the uptake of folate/folic acid into cells via endocytosis, suggesting a possible involvement of this receptor in the mechanism of HALT-1-induced cell lysis. In vivo, does not cause visible paralysis in larvae of the blowfly Sarcophaga faculata, the most common arthropod prey of Hydra. In Hydra vulgaris (Hydra), this protein is Hydra actinoporin-like toxin 2.